Consider the following 1910-residue polypeptide: A disintegrin and metalloproteinase with thrombospondin motifs 20 (1910 aa).

Residues 1 to 21 (MWVAKWLTGLLYHLSLFITRS) form the signal peptide. Positions 22 to 253 (WEVDFHPRQE…DERRHSRKKR (232 aa)) are excised as a propeptide. N-linked (GlcNAc...) asparagine glycans are attached at residues N92 and N191. In terms of domain architecture, Peptidase M12B spans 259–467 (RYIEIMVTAD…GYGECLLDKP (209 aa)). 11 disulfide bridges follow: C334–C387, C363–C369, C381–C462, C419–C446, C489–C511, C500–C521, C506–C540, C534–C545, C568–C605, C572–C610, and C583–C595. Position 403 (H403) interacts with Zn(2+). E404 is a catalytic residue. The Zn(2+) site is built by H407 and H413. N445 carries an N-linked (GlcNAc...) asparagine glycan. Residues 468–555 (DEEIYNLPSE…VNKETETRPV (88 aa)) form the Disintegrin domain. Positions 556-611 (NGEWGPWEPYSSCSRTCGGGIESATRRCNRPEPRNGGNYCVGRRMKFRSCNTDSCP) constitute a TSP type-1 1 domain. N-linked (GlcNAc...) asparagine glycans are attached at residues N702, N717, N728, N809, and N870. Positions 724-846 (TGVFNSSHYG…FNIPLEERSD (123 aa)) are spacer. TSP type-1 domains are found at residues 846-904 (DMFT…NTDC), 905-961 (ELRW…QELC), 966-1023 (VFTR…FSCP), 1024-1073 (SWAA…SPCE), 1076-1135 (TCAS…TPCS), 1152-1206 (KMAQ…DCFT), 1207-1264 (PCGE…AACP), 1304-1356 (RGNQ…QCGP), 1358-1416 (PCPQ…HACP), 1417-1475 (ADVS…VRCP), 1476-1531 (SWKA…QDCV), 1535-1588 (GMER…NPPC), 1589-1652 (NYIV…INSC), and 1654-1710 (HLAT…NDCK). An N-linked (GlcNAc...) asparagine glycan is attached at N1061. N1456 carries an N-linked (GlcNAc...) asparagine glycan. N-linked (GlcNAc...) asparagine glycans are attached at residues N1542 and N1572. Residues 1711 to 1910 (SFTTCKEIQV…MTTGLPIQVI (200 aa)) enclose the GON domain. Residues N1763, N1781, and N1852 are each glycosylated (N-linked (GlcNAc...) asparagine).

Zn(2+) is required as a cofactor. The precursor is cleaved by a furin endopeptidase. Post-translationally, glycosylated. Can be O-fucosylated by POFUT2 on a serine or a threonine residue found within the consensus sequence C1-X(2)-(S/T)-C2-G of the TSP type-1 repeat domains where C1 and C2 are the first and second cysteine residue of the repeat, respectively. Fucosylated repeats can then be further glycosylated by the addition of a beta-1,3-glucose residue by the glucosyltransferase, B3GALTL. Fucosylation mediates the efficient secretion of ADAMTS family members. Can also be C-glycosylated with one or two mannose molecules on tryptophan residues within the consensus sequence W-X-X-W of the TPRs, and N-glycosylated. These other glycosylations can also facilitate secretion. In terms of tissue distribution, very sparingly expressed, although is detected at low levels in testis, prostate, ovary, heart, placenta, lung and pancreas. Overexpressed in several brain, colon and breast carcinomas.

Its subcellular location is the secreted. It is found in the extracellular space. It localises to the extracellular matrix. Functionally, may play a role in tissue-remodeling process occurring in both normal and pathological conditions. May have a protease-independent function in the transport from the endoplasmic reticulum to the Golgi apparatus of secretory cargos, mediated by the GON domain. This chain is A disintegrin and metalloproteinase with thrombospondin motifs 20 (ADAMTS20), found in Homo sapiens (Human).